Reading from the N-terminus, the 142-residue chain is Ribonuclease VapC31 (142 aa).

Residues 3–139 (LLDANVLLAA…ARFASVRHIR (137 aa)) enclose the PINc domain. Aspartate 5 and aspartate 108 together coordinate Mg(2+).

Belongs to the PINc/VapC protein family. The cofactor is Mg(2+).

In terms of biological role, toxic component of a type II toxin-antitoxin (TA) system. An RNase. Its toxic effect is neutralized by coexpression with cognate antitoxin VapB31. The protein is Ribonuclease VapC31 of Mycobacterium tuberculosis (strain CDC 1551 / Oshkosh).